The following is a 449-amino-acid chain: Trigger factor (449 aa).

Positions G162–P242 constitute a PPIase FKBP-type domain. Positions A428–A449 are disordered. Residues P438–A449 show a composition bias toward low complexity.

This sequence belongs to the FKBP-type PPIase family. Tig subfamily.

Its subcellular location is the cytoplasm. The enzyme catalyses [protein]-peptidylproline (omega=180) = [protein]-peptidylproline (omega=0). Its function is as follows. Involved in protein export. Acts as a chaperone by maintaining the newly synthesized protein in an open conformation. Functions as a peptidyl-prolyl cis-trans isomerase. The sequence is that of Trigger factor from Acidothermus cellulolyticus (strain ATCC 43068 / DSM 8971 / 11B).